The chain runs to 783 residues: Probable galactinol--sucrose galactosyltransferase 5 (783 aa).

Residues serine 9 and serine 11 each carry the phosphoserine modification.

The protein belongs to the glycosyl hydrolases 36 family.

The enzyme catalyses alpha-D-galactosyl-(1-&gt;3)-1D-myo-inositol + sucrose = raffinose + myo-inositol. In terms of biological role, transglycosidase operating by a ping-pong reaction mechanism. Involved in the synthesis of raffinose, a major soluble carbohydrate in seeds, roots and tubers. The sequence is that of Probable galactinol--sucrose galactosyltransferase 5 (RFS5) from Arabidopsis thaliana (Mouse-ear cress).